The sequence spans 139 residues: D-ribose pyranase (139 aa).

Residue His-20 is the Proton donor of the active site. Residues Asp-28, His-106, and 128 to 130 (FAN) contribute to the substrate site.

The protein belongs to the RbsD / FucU family. RbsD subfamily. Homodecamer.

It localises to the cytoplasm. The catalysed reaction is beta-D-ribopyranose = beta-D-ribofuranose. It functions in the pathway carbohydrate metabolism; D-ribose degradation; D-ribose 5-phosphate from beta-D-ribopyranose: step 1/2. Its function is as follows. Catalyzes the interconversion of beta-pyran and beta-furan forms of D-ribose. The polypeptide is D-ribose pyranase (Klebsiella pneumoniae (strain 342)).